We begin with the raw amino-acid sequence, 433 residues long: GPI mannosyltransferase 2 (433 aa).

A topological domain (cytoplasmic) is located at residue methionine 1. A helical membrane pass occupies residues 2 to 22 (IVGLTLYFVLFRSIQYLLVFL). The Lumenal portion of the chain corresponds to 23 to 109 (TPIRQFDTST…NNDSIYHALR (87 aa)). N-linked (GlcNAc...) asparagine glycans are attached at residues asparagine 69 and asparagine 101. A helical transmembrane segment spans residues 110-130 (VGVAIENVLFYLSGIVLYFLT). Residues 131–161 (KKIFSQNIRQSQFARTIAKKTSLLFFLTSAA) are Cytoplasmic-facing. The helical transmembrane segment at 162-182 (GFLTSIYSEPLSFFFAFVGIW) threads the bilayer. At 183-215 (SRECSISVPVLGQFDISWRYWFPYSFISMACFT) the chain is on the lumenal side. A helical membrane pass occupies residues 216–236 (LASLNRSNCVLLGIYFIFDLI). Topologically, residues 237-243 (ELTKNRK) are cytoplasmic. A helical transmembrane segment spans residues 244-264 (FVKAICFPLLSGSLMFSALLY). At 265–318 (QQYYLPYKTFCPQRGEWCKSQLFSSIFITKTSLYSYIQSHYWGVGLLKYWTPNN) the chain is on the lumenal side. A helical transmembrane segment spans residues 319 to 339 (IPNFLFAVPNIIILIYSSIYF). The Cytoplasmic portion of the chain corresponds to 340–350 (SKIYPSYNLKA). The helical transmembrane segment at 351–371 (LVWITRALVVIVCFFAHVQIL) threads the bilayer. Residues 372 to 409 (NRIASFLPLHLWYLADRLVKTSDPKKMENPKGDDKIVK) lie on the Lumenal side of the membrane. A helical membrane pass occupies residues 410–430 (FYIYWLAFWIPLQTILFAAFL). The Cytoplasmic segment spans residues 431 to 433 (PPA).

This sequence belongs to the PIGV family. As to quaternary structure, part of the GPI mannosyltransferase 2 complex composed of GPI18 and PGA1.

It is found in the endoplasmic reticulum membrane. It functions in the pathway glycolipid biosynthesis; glycosylphosphatidylinositol-anchor biosynthesis. In terms of biological role, mannosyltransferase involved in glycosylphosphatidylinositol-anchor biosynthesis. Responsible for the transfer of the second mannose to the glycosylphosphatidylinositol during GPI precursor assembly. The chain is GPI mannosyltransferase 2 (GPI18) from Saccharomyces cerevisiae (strain ATCC 204508 / S288c) (Baker's yeast).